The sequence spans 275 residues: Ribosomal RNA small subunit methyltransferase A (275 aa).

Residues asparagine 19, leucine 21, glycine 46, glutamate 71, aspartate 94, and asparagine 117 each coordinate S-adenosyl-L-methionine.

The protein belongs to the class I-like SAM-binding methyltransferase superfamily. rRNA adenine N(6)-methyltransferase family. RsmA subfamily.

It localises to the cytoplasm. It carries out the reaction adenosine(1518)/adenosine(1519) in 16S rRNA + 4 S-adenosyl-L-methionine = N(6)-dimethyladenosine(1518)/N(6)-dimethyladenosine(1519) in 16S rRNA + 4 S-adenosyl-L-homocysteine + 4 H(+). Its function is as follows. Specifically dimethylates two adjacent adenosines (A1518 and A1519) in the loop of a conserved hairpin near the 3'-end of 16S rRNA in the 30S particle. May play a critical role in biogenesis of 30S subunits. In Burkholderia mallei (strain NCTC 10247), this protein is Ribosomal RNA small subunit methyltransferase A.